The sequence spans 354 residues: Rhodopsin (354 aa).

The Extracellular segment spans residues 1 to 36 (MNGTEGPYFYIPMLNTTGVVRSPYEYPQYYLVNPAA). N-linked (GlcNAc...) asparagine glycans are attached at residues asparagine 2 and asparagine 15. Residues 37–61 (YAVLGAYMFFLILVGFPINFLTLYV) form a helical membrane-spanning segment. Residues 62–73 (TIEHKKLRTPLN) are Cytoplasmic-facing. The chain crosses the membrane as a helical span at residues 74 to 96 (YILLNLAVADLFMVFGGFTTTIY). Residues 97-110 (TSMHGYFVLGRLGC) are Extracellular-facing. Cysteines 110 and 187 form a disulfide. Residues 111-133 (NVEGFSATLGGEIALWSLVVLAI) traverse the membrane as a helical segment. The 'Ionic lock' involved in activated form stabilization signature appears at 134–136 (ERW). Residues 134 to 152 (ERWVVVCKPISNFRFGENH) lie on the Cytoplasmic side of the membrane. A helical membrane pass occupies residues 153–173 (AIMGVAFTWFMAAACAVPPLF). The Extracellular portion of the chain corresponds to 174-202 (GWSRYIPEGMQCSCGIDYYTRAEGFNNES). Residue asparagine 200 is glycosylated (N-linked (GlcNAc...) asparagine). A helical transmembrane segment spans residues 203–224 (FVIYMFTCHFCIPLMVVFFCYG). Over 225–252 (RLVCAVKEAAAAQQESETTQRAEREVTR) the chain is Cytoplasmic. Residues 253–274 (MVIIMVVSFLVSWVPYASVAWY) traverse the membrane as a helical segment. The Extracellular segment spans residues 275–286 (IFTHQGSEFGPL). The helical transmembrane segment at 287–308 (FMTIPAFFAKSSSIYNPMIYIC) threads the bilayer. N6-(retinylidene)lysine is present on lysine 296. The Cytoplasmic segment spans residues 309–354 (MNKQFRHCMITTLCCGKNPFEEEEGASSTASKTEASSVSSSSVSPA). 2 S-palmitoyl cysteine lipidation sites follow: cysteine 322 and cysteine 323. Positions 329–354 (EEEEGASSTASKTEASSVSSSSVSPA) are disordered. Residues 334-354 (ASSTASKTEASSVSSSSVSPA) show a composition bias toward low complexity.

Belongs to the G-protein coupled receptor 1 family. Opsin subfamily. In terms of processing, phosphorylated on some or all of the serine and threonine residues present in the C-terminal region. Contains one covalently linked retinal chromophore.

The protein resides in the membrane. It localises to the cell projection. The protein localises to the cilium. It is found in the photoreceptor outer segment. Photoreceptor required for image-forming vision at low light intensity. While most salt water fish species use retinal as chromophore, most freshwater fish use 3-dehydroretinal, or a mixture of retinal and 3-dehydroretinal. Light-induced isomerization of 11-cis to all-trans retinal triggers a conformational change that activates signaling via G-proteins. Subsequent receptor phosphorylation mediates displacement of the bound G-protein alpha subunit by arrestin and terminates signaling. The chain is Rhodopsin (rho) from Atherina boyeri (Big-scale sand smelt).